The following is a 448-amino-acid chain: MKIYNTYSRQLEDFQPIEPGKVKMYVCGPTVYNYIHVGNARSVVAFDLVRKYLEFRGFEVEYISNFTDVDDKIIKAAASENISTKELSERYIAAFYEDTDLLNVKRASQNPKATEFIEAMIDFIQELLDKDYAYISEGDVYFRVAKSKDYAKLANKNLADLLAGASGRTDEETNLKESPADFALWKSVKADEVSWQAPWGAGRPGWHIECSVMSTSLLGETIDIHGGGADLEFPHHTNEIAQSEAKTGQKFVNYWMHNGFVNVDGEKMSKSLGNFTTVHELLQVVDPQILRFFLTTTHYRRPLNFTDDALTEAENNIKKIENAYRHLDDQAESNLSALTTFRNDFVAAMDEDFNIANGMTVFYDFVSWVNKGNGGAEVKAFFDQVLEILGIKFEIEQSLDSEIEAMIEERQLAREVRDFAKSDEIRDALKAQGIVLEDTKDGVRWHRE.

Cysteine 27 is a binding site for Zn(2+). The 'HIGH' region motif lies at 29-39 (PTVYNYIHVGN). The Zn(2+) site is built by cysteine 210, histidine 235, and glutamate 239. Positions 267–271 (KMSKS) match the 'KMSKS' region motif. ATP is bound at residue lysine 270.

It belongs to the class-I aminoacyl-tRNA synthetase family. Monomer. Requires Zn(2+) as cofactor.

It localises to the cytoplasm. It catalyses the reaction tRNA(Cys) + L-cysteine + ATP = L-cysteinyl-tRNA(Cys) + AMP + diphosphate. In Lactococcus lactis subsp. cremoris (strain MG1363), this protein is Cysteine--tRNA ligase.